A 702-amino-acid chain; its full sequence is Methionine--tRNA ligase (702 aa).

Residues 14–24 carry the 'HIGH' region motif; the sequence is PYANGPVHLGH. Zn(2+) is bound by residues C146, C149, C159, and C162. The short motif at 344 to 348 is the 'KMSKS' region element; that stretch reads KFSKS. K347 serves as a coordination point for ATP. The region spanning 601–702 is the tRNA-binding domain; sequence DFQKVDLRVA…GEKINGQSVQ (102 aa).

This sequence belongs to the class-I aminoacyl-tRNA synthetase family. MetG type 1 subfamily. Homodimer. Zn(2+) serves as cofactor.

The protein localises to the cytoplasm. It carries out the reaction tRNA(Met) + L-methionine + ATP = L-methionyl-tRNA(Met) + AMP + diphosphate. In terms of biological role, is required not only for elongation of protein synthesis but also for the initiation of all mRNA translation through initiator tRNA(fMet) aminoacylation. In Chlorobium luteolum (strain DSM 273 / BCRC 81028 / 2530) (Pelodictyon luteolum), this protein is Methionine--tRNA ligase.